We begin with the raw amino-acid sequence, 239 residues long: Ribonuclease PH (239 aa).

Residues Arg86 and 124–126 contribute to the phosphate site; that span reads GTR.

This sequence belongs to the RNase PH family. As to quaternary structure, homohexameric ring arranged as a trimer of dimers.

It catalyses the reaction tRNA(n+1) + phosphate = tRNA(n) + a ribonucleoside 5'-diphosphate. Phosphorolytic 3'-5' exoribonuclease that plays an important role in tRNA 3'-end maturation. Removes nucleotide residues following the 3'-CCA terminus of tRNAs; can also add nucleotides to the ends of RNA molecules by using nucleoside diphosphates as substrates, but this may not be physiologically important. Probably plays a role in initiation of 16S rRNA degradation (leading to ribosome degradation) during starvation. The protein is Ribonuclease PH of Rhodopseudomonas palustris (strain BisB18).